Here is a 305-residue protein sequence, read N- to C-terminus: Uridylate-specific endoribonuclease D (305 aa).

An N-terminal signal peptide occupies residues 1 to 17; sequence MKVYFVFLCLLPSLISG. Residues 33 to 305 enclose the EndoU domain; the sequence is SNAEIQSLAE…RYVASSYPNI (273 aa). Residues H182, H197, and K240 contribute to the active site. N288 carries an N-linked (GlcNAc...) asparagine glycan.

Belongs to the ENDOU family. In terms of assembly, monomer. Mn(2+) is required as a cofactor.

It is found in the secreted. It carries out the reaction ribonucleotidyl-uridine-RNA = a 5'-end dephospho-uridine-RNA + a 3'-end 2',3'-cyclophospho-ribonucleotide-RNA. Its function is as follows. Endoribonuclease that cleaves single-stranded RNAs at 5' of uridylates and releases a product with a 2',3'-cyclic phosphate at the 3'-end. The polypeptide is Uridylate-specific endoribonuclease D (endou-d) (Xenopus laevis (African clawed frog)).